The following is a 240-amino-acid chain: UDP-2,3-diacylglucosamine hydrolase (240 aa).

The Mn(2+) site is built by Asp-8, His-10, Asp-41, Asn-79, and His-114. 79 to 80 serves as a coordination point for substrate; the sequence is NR. Substrate-binding residues include Asp-122, Ser-160, Asn-164, Lys-167, and His-195. Mn(2+)-binding residues include His-195 and His-197.

The protein belongs to the LpxH family. Mn(2+) serves as cofactor.

The protein resides in the cell inner membrane. It carries out the reaction UDP-2-N,3-O-bis[(3R)-3-hydroxytetradecanoyl]-alpha-D-glucosamine + H2O = 2-N,3-O-bis[(3R)-3-hydroxytetradecanoyl]-alpha-D-glucosaminyl 1-phosphate + UMP + 2 H(+). It participates in glycolipid biosynthesis; lipid IV(A) biosynthesis; lipid IV(A) from (3R)-3-hydroxytetradecanoyl-[acyl-carrier-protein] and UDP-N-acetyl-alpha-D-glucosamine: step 4/6. Functionally, hydrolyzes the pyrophosphate bond of UDP-2,3-diacylglucosamine to yield 2,3-diacylglucosamine 1-phosphate (lipid X) and UMP by catalyzing the attack of water at the alpha-P atom. Involved in the biosynthesis of lipid A, a phosphorylated glycolipid that anchors the lipopolysaccharide to the outer membrane of the cell. This is UDP-2,3-diacylglucosamine hydrolase from Shigella dysenteriae serotype 1 (strain Sd197).